The sequence spans 529 residues: Protein FLOURY ENDOSPERM 6, chloroplastic (529 aa).

Disordered regions lie at residues 1-22 (MLPLLLPLPVTPPPPLPSPTLT), 39-77 (AAPHHHHHHRRRRVYRRQRAAPTQTRAPRRTLSASNAAR), and 166-275 (QGAV…HNKS). Residues 1–71 (MLPLLLPLPV…QTRAPRRTLS (71 aa)) constitute a chloroplast transit peptide. Positions 9 to 18 (PVTPPPPLPS) are enriched in pro residues. The segment covering 41–57 (PHHHHHHRRRRVYRRQR) has biased composition (basic residues). Positions 400-452 (VMQAQEELRSIRAKIAVLEGKMALEIIEKNKIIEEKQRRLDEAEKALSELRTV) form a coiled coil.

Interacts with SKIPA. Interacts with ISA1. In terms of tissue distribution, expressed in leaves, stems and panicles. Expressed at lower levels in roots and developing seeds.

The protein localises to the plastid. The protein resides in the chloroplast. In terms of biological role, involved in compound starch granule formation and starch synthesis in endosperm. May act as a regulatory scaffolding protein and affect starch synthesis and compound starch granule formation through direct interaction with isoamylase 1 (ISA1). Binds starch, amylopectin and amylose through its C-terminal carbohydrate-binding domain (CBM) in vitro. In Oryza sativa subsp. japonica (Rice), this protein is Protein FLOURY ENDOSPERM 6, chloroplastic.